Reading from the N-terminus, the 200-residue chain is Protein C2-DOMAIN ABA-RELATED 5 (200 aa).

Residues 22 to 142 (VAGEKHKDRR…LKMHLHDLPS (121 aa)) form the C2 domain. Residues arginine 57, aspartate 58, aspartate 63, aspartate 109, tyrosine 110, aspartate 111, and aspartate 117 each contribute to the Ca(2+) site.

Belongs to the plant CAR protein family. As to quaternary structure, binds to PYR/PYL/RCAR abscisic acid intracellular receptors in an ABA-independent manner, both at the plasma membrane and in the nucleus.

Its subcellular location is the cell membrane. It is found in the nucleus. Functionally, stimulates the GTPase/ATPase activities of Obg-like ATPases. Mediates the transient calcium-dependent interaction of PYR/PYL/RCAR abscisic acid (ABA) receptors with the plasma membrane and thus regulates ABA sensitivity. The protein is Protein C2-DOMAIN ABA-RELATED 5 of Arabidopsis thaliana (Mouse-ear cress).